We begin with the raw amino-acid sequence, 287 residues long: Nitrogenase iron protein (287 aa).

8 to 15 is a binding site for ATP; sequence GKGGIGKS. Cys-96 lines the [4Fe-4S] cluster pocket. ADP-ribosylarginine; by dinitrogenase reductase ADP-ribosyltransferase is present on Arg-99. Cys-130 contacts [4Fe-4S] cluster.

Belongs to the NifH/BchL/ChlL family. As to quaternary structure, homodimer. It depends on [4Fe-4S] cluster as a cofactor. In terms of processing, the reversible ADP-ribosylation of Arg-99 inactivates the nitrogenase reductase and regulates nitrogenase activity.

It catalyses the reaction N2 + 8 reduced [2Fe-2S]-[ferredoxin] + 16 ATP + 16 H2O = H2 + 8 oxidized [2Fe-2S]-[ferredoxin] + 2 NH4(+) + 16 ADP + 16 phosphate + 6 H(+). The key enzymatic reactions in nitrogen fixation are catalyzed by the nitrogenase complex, which has 2 components: the iron protein and the molybdenum-iron protein. The chain is Nitrogenase iron protein from Frankia casuarinae (strain DSM 45818 / CECT 9043 / HFP020203 / CcI3).